A 191-amino-acid chain; its full sequence is MIAIYPGSFDPITLGHLDIIQRGSRLFDLVIVAVLRNPSKVPLFSVQERLEQIRRTTKHLPNVEADGFDGLTVNYAQQRQAQVLLRGLRAISDFEVELQMAHTNKTLSTQIETVFLATSNEYSFLSSSVVKEIARFGGSVDHLVPPHIALDIYKCYNHNYPTANPTTMEITPPHQNMATVAPQEILQEQET.

Substrate is bound at residue Ser-8. ATP is bound by residues 8 to 9 (SF) and His-16. 3 residues coordinate substrate: Lys-40, Thr-72, and Arg-86. ATP-binding positions include 87–89 (GLR), Glu-97, and 122–128 (YSFLSSS).

This sequence belongs to the bacterial CoaD family. Homohexamer. It depends on Mg(2+) as a cofactor.

The protein localises to the cytoplasm. The catalysed reaction is (R)-4'-phosphopantetheine + ATP + H(+) = 3'-dephospho-CoA + diphosphate. Its pathway is cofactor biosynthesis; coenzyme A biosynthesis; CoA from (R)-pantothenate: step 4/5. Its function is as follows. Reversibly transfers an adenylyl group from ATP to 4'-phosphopantetheine, yielding dephospho-CoA (dPCoA) and pyrophosphate. The polypeptide is Phosphopantetheine adenylyltransferase (Nostoc sp. (strain PCC 7120 / SAG 25.82 / UTEX 2576)).